We begin with the raw amino-acid sequence, 443 residues long: UPF0597 protein DVU_0440 (443 aa).

Belongs to the UPF0597 family.

The chain is UPF0597 protein DVU_0440 from Nitratidesulfovibrio vulgaris (strain ATCC 29579 / DSM 644 / CCUG 34227 / NCIMB 8303 / VKM B-1760 / Hildenborough) (Desulfovibrio vulgaris).